The sequence spans 287 residues: Protease HtpX (287 aa).

2 consecutive transmembrane segments (helical) span residues 4 to 24 and 33 to 53; these read IFLLIATNMAILLVASIVMSI and GGLLVFAAIFGFGGAFISLAI. H139 lines the Zn(2+) pocket. The active site involves E140. H143 lines the Zn(2+) pocket. The next 2 membrane-spanning stretches (helical) occupy residues 154–174 and 195–215; these read LIQGVVNTFVIFAARVVAGII and AVVFVLDMLFGILASIIVAYF. E220 lines the Zn(2+) pocket.

Belongs to the peptidase M48B family. Zn(2+) is required as a cofactor.

It is found in the cell inner membrane. The sequence is that of Protease HtpX from Shewanella halifaxensis (strain HAW-EB4).